A 164-amino-acid chain; its full sequence is MASPHQEPKPGDLIEIFRLGYEHWALYIGDGYVIHLAPPSEYPGAGSSSVFSVLSNSAEVKRERLEDVVGGCCYRVNNSLDHEYQPRPVEVIISSAKEMVGQKMKYSIVSRNCEHFVTQLRYGKSRCKQVEKAKVEVGVATALGILVVAGCSFAIRRYQKKATA.

The tract at residues 1–40 is essential for its ability regulate keratinocyte differentiation; it reads MASPHQEPKPGDLIEIFRLGYEHWALYIGDGYVIHLAPPS. Residues 1-134 are Cytoplasmic-facing; that stretch reads MASPHQEPKP…SRCKQVEKAK (134 aa). Residues 13-129 enclose the LRAT domain; the sequence is LIEIFRLGYE…LRYGKSRCKQ (117 aa). Active-site residues include His-23 and His-35. Cys-113 acts as the Acyl-thioester intermediate in catalysis. Residues 124–164 are interaction with TGM1; it reads KSRCKQVEKAKVEVGVATALGILVVAGCSFAIRRYQKKATA. The helical transmembrane segment at 135–155 threads the bilayer; that stretch reads VEVGVATALGILVVAGCSFAI. The Lumenal portion of the chain corresponds to 156 to 164; sequence RRYQKKATA.

It belongs to the H-rev107 family. In terms of assembly, interacts with TGM1. Widely expressed.

It is found in the membrane. The catalysed reaction is a 1,2-diacyl-sn-glycero-3-phosphocholine + H2O = a 1-acyl-sn-glycero-3-phosphocholine + a fatty acid + H(+). It carries out the reaction a 1,2-diacyl-sn-glycero-3-phosphocholine + H2O = a 2-acyl-sn-glycero-3-phosphocholine + a fatty acid + H(+). The enzyme catalyses 1,2-dihexadecanoyl-sn-glycero-3-phosphocholine + H2O = 1-hexadecanoyl-sn-glycero-3-phosphocholine + hexadecanoate + H(+). It catalyses the reaction 1,2-dihexadecanoyl-sn-glycero-3-phosphocholine + H2O = 2-hexadecanoyl-sn-glycero-3-phosphocholine + hexadecanoate + H(+). The catalysed reaction is 1-hexadecanoyl-2-(9Z-octadecenoyl)-sn-glycero-3-phosphocholine + H2O = 2-(9Z-octadecenoyl)-sn-glycero-3-phosphocholine + hexadecanoate + H(+). It carries out the reaction 1-hexadecanoyl-2-(9Z-octadecenoyl)-sn-glycero-3-phosphocholine + H2O = 1-hexadecanoyl-sn-glycero-3-phosphocholine + (9Z)-octadecenoate + H(+). The enzyme catalyses 1-hexadecanoyl-2-(5Z,8Z,11Z,14Z-eicosatetraenoyl)-sn-glycero-3-phosphocholine + H2O = 2-(5Z,8Z,11Z,14Z)-eicosatetraenoyl-sn-glycero-3-phosphocholine + hexadecanoate + H(+). It catalyses the reaction 1-hexadecanoyl-2-(9Z,12Z-octadecadienoyl)-sn-glycero-3-phosphoethanolamine + H2O = 1-hexadecanoyl-sn-glycero-3-phosphoethanolamine + (9Z,12Z)-octadecadienoate + H(+). The catalysed reaction is 1-hexadecanoyl-2-(9Z,12Z-octadecadienoyl)-sn-glycero-3-phosphoethanolamine + H2O = 2-(9Z,12Z)-octadecadienoyl-sn-glycero-3-phosphoethanolamine + hexadecanoate + H(+). It carries out the reaction 1-hexadecanoyl-2-(5Z,8Z,11Z,14Z-eicosatetraenoyl)-sn-glycero-3-phosphoethanolamine + H2O = 2-(5Z,8Z,11Z,14Z)-eicosatetraenoyl-sn-glycero-3-phosphoethanolamine + hexadecanoate + H(+). The enzyme catalyses 1-hexanoyl-2-acyl-sn-glycero-3-phosphocholine + H2O = hexanoate + a 2-acyl-sn-glycero-3-phosphocholine + H(+). It catalyses the reaction 1,2-diheptadecanoyl-sn-glycero-3-phosphoethanolamine + 1-(9Z-octadecenoyl)-2-hexadecanoyl-sn-glycero-3-phosphocholine = 1,2-diheptadecanoyl-sn-glycero-3-phospho-N-hexadecanoyl-ethanolamine + 1-(9Z-octadecenoyl)-sn-glycero-3-phosphocholine + H(+). The catalysed reaction is 1,2-diheptadecanoyl-sn-glycero-3-phosphoethanolamine + 1-(9Z-octadecenoyl)-2-hexadecanoyl-sn-glycero-3-phosphocholine = 1,2-diheptadecanoyl-sn-glycero-3-phospho-N-(9Z-octadecenoyl)-ethanolamine + 2-hexadecanoyl-sn-glycero-3-phosphocholine + H(+). Exhibits both phospholipase A1/2 and acyltransferase activities. Shows phospholipase A1 (PLA1) and A2 (PLA2), catalyzing the calcium-independent release of fatty acids from the sn-1 or sn-2 position of glycerophospholipids. For most substrates, PLA1 activity is much higher than PLA2 activity. Shows O-acyltransferase activity, catalyzing the transfer of a fatty acyl group from glycerophospholipid to the hydroxyl group of lysophospholipid. Shows N-acyltransferase activity, catalyzing the calcium-independent transfer of a fatty acyl group at the sn-1 position of phosphatidylcholine (PC) and other glycerophospholipids to the primary amine of phosphatidylethanolamine (PE), forming N-acylphosphatidylethanolamine (NAPE), which serves as precursor for N-acylethanolamines (NAEs). Promotes keratinocyte differentiation via activation of TGM1. This Homo sapiens (Human) protein is Phospholipase A and acyltransferase 4.